Reading from the N-terminus, the 282-residue chain is MTKDREIRQTVPAQPTSDGDGVKIQRIAGFQRPNFSPFLMLDELKADSQADYIGGFPPHPHRGIETLTYMLQGHFQHRDQMGNVGELRSGGAQWMAAGHGVIHSEMPIMQEGQLHGFQIWINQPARNKMSPAKYQDFQPESIVERHHPQQGLLRVIAGSVEVEDQTITGPLTDTGVPATVVDWRAEAGQDISINTPPHFNAMLYVYRGSLNVGKQSVKTGHMAMLTAGEQLTLRAEQPCGSLLLMGQPIDEPVVHYGPFVMNSMAEIEQAIRDYNAGHFETY.

A disordered region spans residues 1–21 (MTKDREIRQTVPAQPTSDGDG). 4 residues coordinate a divalent metal cation: His-59, His-61, His-103, and Glu-105.

It belongs to the pirin family. Requires a divalent metal cation as cofactor.

The catalysed reaction is quercetin + O2 = 2-(3,4-dihydroxybenzoyloxy)-4,6-dihydroxybenzoate + CO. It participates in flavonoid metabolism; quercetin degradation. Functionally, putative quercetin 2,3-dioxygenase. The sequence is that of Putative quercetin 2,3-dioxygenase VC_A0969 from Vibrio cholerae serotype O1 (strain ATCC 39315 / El Tor Inaba N16961).